The following is a 400-amino-acid chain: Enoyl-[acyl-carrier-protein] reductase [NADH] (400 aa).

NAD(+) is bound by residues 48–53 (GASTGY), 74–75 (FE), 111–112 (DA), and 139–140 (LA). Position 225 (Tyr-225) interacts with substrate. Residue Tyr-235 is the Proton donor of the active site. Residues Lys-244 and 273 to 275 (VVT) each bind NAD(+).

It belongs to the TER reductase family. In terms of assembly, monomer.

The enzyme catalyses a 2,3-saturated acyl-[ACP] + NAD(+) = a (2E)-enoyl-[ACP] + NADH + H(+). It functions in the pathway lipid metabolism; fatty acid biosynthesis. In terms of biological role, involved in the final reduction of the elongation cycle of fatty acid synthesis (FAS II). Catalyzes the reduction of a carbon-carbon double bond in an enoyl moiety that is covalently linked to an acyl carrier protein (ACP). The chain is Enoyl-[acyl-carrier-protein] reductase [NADH] from Burkholderia lata (strain ATCC 17760 / DSM 23089 / LMG 22485 / NCIMB 9086 / R18194 / 383).